Here is an 84-residue protein sequence, read N- to C-terminus: uncharacterized protein (84 aa).

The helical transmembrane segment at 13–35 (TTLVLTIISTTTTTLFAIIQLYL) threads the bilayer. The stretch at 41–84 (LKDAVKEIVNSELSNLKTEIEELKIKQDELSRQVEEIKRKLDQK) forms a coiled coil.

Its subcellular location is the host membrane. This is an uncharacterized protein from Sulfolobus islandicus rod-shaped virus 1 (SIRV-1).